A 60-amino-acid polypeptide reads, in one-letter code: UPF0434 protein Bpro_2950 (60 aa).

It belongs to the UPF0434 family.

In Polaromonas sp. (strain JS666 / ATCC BAA-500), this protein is UPF0434 protein Bpro_2950.